The chain runs to 64 residues: Alpha-conotoxin CnIC (64 aa).

Residues 1–21 form the signal peptide; that stretch reads MGMRMMFTVFLLVVLTTTVVS. Positions 22 to 47 are excised as a propeptide; it reads FPSDSASDVRDDEAKDERSDMYKSKR. At asparagine 48 the chain carries Deamidated asparagine; in CnIH; partial. Disulfide bonds link cysteine 51-cysteine 56 and cysteine 52-cysteine 62. Position 62 is a cysteine amide (cysteine 62).

It belongs to the conotoxin A superfamily. As to expression, expressed by the venom duct.

It localises to the secreted. In terms of biological role, alpha-conotoxins act on postsynaptic membranes, they bind to the nicotinic acetylcholine receptors (nAChR) and thus inhibit them. This is Alpha-conotoxin CnIC from Conus consors (Singed cone).